Here is a 93-residue protein sequence, read N- to C-terminus: Cell division protein FtsB (93 aa).

The Cytoplasmic portion of the chain corresponds to 1 to 3 (MRL). A helical membrane pass occupies residues 4–21 (FILSLFALLVMFQYDFWF). Over 22–93 (GKNGYLDYQD…FYRIVKNKNR (72 aa)) the chain is Periplasmic. Residues 28–76 (DYQDIKAEIIQRKQENKKLSQRNQTIFAEIQDLKNGIEAIEERARMEHE) are a coiled coil.

It belongs to the FtsB family. In terms of assembly, part of a complex composed of FtsB, FtsL and FtsQ.

It localises to the cell inner membrane. Its function is as follows. Essential cell division protein. May link together the upstream cell division proteins, which are predominantly cytoplasmic, with the downstream cell division proteins, which are predominantly periplasmic. The protein is Cell division protein FtsB of Histophilus somni (strain 129Pt) (Haemophilus somnus).